A 276-amino-acid polypeptide reads, in one-letter code: Large ribosomal subunit protein uL2 (276 aa).

Disordered stretches follow at residues 1–50 and 206–276; these read MPIK…GRVT and GKAG…SKKR. The segment covering 7–19 has biased composition (polar residues); sequence RPTTPTRRFQTVV. Residues 20-38 are compositionally biased toward basic and acidic residues; the sequence is SREDITKQTPEKSLVESKK.

This sequence belongs to the universal ribosomal protein uL2 family. Part of the 50S ribosomal subunit. Forms a bridge to the 30S subunit in the 70S ribosome.

Functionally, one of the primary rRNA binding proteins. Required for association of the 30S and 50S subunits to form the 70S ribosome, for tRNA binding and peptide bond formation. It has been suggested to have peptidyltransferase activity; this is somewhat controversial. Makes several contacts with the 16S rRNA in the 70S ribosome. The sequence is that of Large ribosomal subunit protein uL2 from Solibacter usitatus (strain Ellin6076).